Reading from the N-terminus, the 407-residue chain is Inhibin beta B chain (407 aa).

Residues 1–28 (MDGLPGRALGAACLLLLAAGWLGPEAWG) form the signal peptide. Positions 26 to 62 (AWGSPTPPPTPAAPPPPPPPGSPGGSQDTCTSCGGFR) are disordered. Residues 29-292 (SPTPPPTPAA…GDSRHRIRKR (264 aa)) constitute a propeptide that is removed on maturation. Residues 30 to 47 (PTPPPTPAAPPPPPPPGS) show a composition bias toward pro residues. An N-linked (GlcNAc...) asparagine glycan is attached at Asn-93. 4 disulfides stabilise this stretch: Cys-296/Cys-304, Cys-303/Cys-372, Cys-332/Cys-404, and Cys-336/Cys-406.

This sequence belongs to the TGF-beta family. Dimeric, linked by one or more disulfide bonds. Inhibin B is a dimer of alpha and beta-B. Activin B is a homodimer of beta-B. Activin AB is a dimer of beta-A and beta-B. Interacts with FST and FSTL3. Activin B interacts with BMPR2.

The protein resides in the secreted. Inhibins and activins inhibit and activate, respectively, the secretion of follitropin by the pituitary gland. Inhibins/activins are involved in regulating a number of diverse functions such as hypothalamic and pituitary hormone secretion, gonadal hormone secretion, germ cell development and maturation, erythroid differentiation, insulin secretion, nerve cell survival, embryonic axial development or bone growth, depending on their subunit composition. Inhibins appear to oppose the functions of activins. In terms of biological role, activin B is a dimer of alpha and beta-B that plays a role in several essential biological processes including embryonic development, stem cell maintenance and differentiation, haematopoiesis, cell proliferation and wound healing. Signals through type I receptor ACVR1C, abundantly expressed in pancreatic beta cells, and type II receptors like ACVR2A or BMPR2. Upon ligand binding, these receptors phosphorylate intracellular signaling mediators SMAD2 and SMAD3, which form a complex with SMAD4, translocate to the nucleus, and regulate gene expression. Plays a crucial role in the induction of hepcidin by inflammation through activation of ACVR1C and subsequent phosphorylation of SMAD1/5/8. Regulates adipocyte lipid metabolism by decreasing non-esterified fatty acids and glycerol release and increases intracellular triglyceride content. Stimulates wound healing by promoting cell migration and hair follicle regeneration through the JNK and ERK signaling pathways downstream of RHOA. Functionally, inhibin B is a dimer of alpha and beta-B that plays a crucial role in the regulation of the reproductive system by inhibiting the secretion of follicle-stimulating hormone (FSH) from the anterior pituitary gland. Thereby, maintains reproductive homeostasis in both males and females. Acts as a more potent suppressor of FSH release than inhibin A. Functions as competitive receptor antagonist binding activin type II receptors with high affinity in the presence of the TGF-beta type III coreceptor/TGFBR3L. The protein is Inhibin beta B chain (INHBB) of Homo sapiens (Human).